Here is a 430-residue protein sequence, read N- to C-terminus: Paraneoplastic antigen-like protein 8A (430 aa).

Residues 219 to 228 (WKNTEDHGDP) show a composition bias toward basic and acidic residues. Disordered regions lie at residues 219-270 (WKNT…NSNY), 313-364 (DPSD…RKKK), and 392-430 (GLGA…SRKL). Positions 232–250 (LVRRPGGKIRSRRRKQKKN) are enriched in basic residues. Positions 261 to 270 (SQGSNYNSNY) are enriched in polar residues.

Belongs to the PNMA family.

This chain is Paraneoplastic antigen-like protein 8A, found in Mus musculus (Mouse).